The following is a 171-amino-acid chain: Sec-independent protein translocase protein TatB (171 aa).

A helical transmembrane segment spans residues 1 to 21 (MFDIGFSELLLVFIIGLVVLG). Residues 89-171 (AESMKRSYVA…APSPSSSDKP (83 aa)) are disordered. Over residues 100–123 (DPEKASDEAHTIHNPVVKDNETAH) the composition is skewed to basic and acidic residues. Polar residues predominate over residues 130–139 (AAQTQASSPE).

The protein belongs to the TatB family. The Tat system comprises two distinct complexes: a TatABC complex, containing multiple copies of TatA, TatB and TatC subunits, and a separate TatA complex, containing only TatA subunits. Substrates initially bind to the TatABC complex, which probably triggers association of the separate TatA complex to form the active translocon.

It localises to the cell inner membrane. Its function is as follows. Part of the twin-arginine translocation (Tat) system that transports large folded proteins containing a characteristic twin-arginine motif in their signal peptide across membranes. Together with TatC, TatB is part of a receptor directly interacting with Tat signal peptides. TatB may form an oligomeric binding site that transiently accommodates folded Tat precursor proteins before their translocation. This Escherichia coli O1:K1 / APEC protein is Sec-independent protein translocase protein TatB.